The following is a 97-amino-acid chain: SAGA-associated factor 11 (97 aa).

The SGF11-type zinc-finger motif lies at 70-91 (IECNVCGREVSGNRFAAHLVRC).

This sequence belongs to the SGF11 family. Component of the 1.8 MDa SAGA transcription coactivator-HAT complex. SAGA is built of 5 distinct domains with specialized functions. Within the SAGA complex, SUS1, SGF11, SGF73 and UBP8 form an additional subcomplex of SAGA called the DUB module (deubiquitination module). Interacts directly with SGF73, SUS1 and UBP8.

It localises to the nucleus. Functions as a component of the transcription regulatory histone acetylation (HAT) complex SAGA. At the promoters, SAGA is required for recruitment of the basal transcription machinery. It influences RNA polymerase II transcriptional activity through different activities such as TBP interaction and promoter selectivity, interaction with transcription activators, and chromatin modification through histone acetylation and deubiquitination. SAGA acetylates nucleosomal histone H3 to some extent (to form H3K9ac, H3K14ac, H3K18ac and H3K23ac). SAGA interacts with DNA via upstream activating sequences (UASs). Involved in transcriptional regulation of a subset of SAGA-regulated genes. Within the SAGA complex, participates in a subcomplex, that specifically deubiquitinates histones H2B. This is SAGA-associated factor 11 from Kluyveromyces lactis (strain ATCC 8585 / CBS 2359 / DSM 70799 / NBRC 1267 / NRRL Y-1140 / WM37) (Yeast).